The chain runs to 296 residues: 4-hydroxybenzoate octaprenyltransferase (296 aa).

8 helical membrane passes run 28-48 (PIGIYLLLWPTLTAVWIAGLG), 52-72 (LANVLIFGLGVVLMRAAGCCI), 102-122 (ALALFGILVAVSFLLVLCTNS), 145-167 (TYYPQVVLGAAYSWGIPMAFTAA), 174-196 (SAWLLYIANLLWTVGYDTYYAMV), 219-239 (MIILTLQMLSLGCLLLAGSRF), 241-261 (LGGWFHLGLLGAALCFAWEYW), and 275-295 (FLHNHWAGLLVFMGVVLDYAL).

This sequence belongs to the UbiA prenyltransferase family. Requires Mg(2+) as cofactor.

The protein resides in the cell inner membrane. The catalysed reaction is all-trans-octaprenyl diphosphate + 4-hydroxybenzoate = 4-hydroxy-3-(all-trans-octaprenyl)benzoate + diphosphate. It functions in the pathway cofactor biosynthesis; ubiquinone biosynthesis. In terms of biological role, catalyzes the prenylation of para-hydroxybenzoate (PHB) with an all-trans polyprenyl group. Mediates the second step in the final reaction sequence of ubiquinone-8 (UQ-8) biosynthesis, which is the condensation of the polyisoprenoid side chain with PHB, generating the first membrane-bound Q intermediate 3-octaprenyl-4-hydroxybenzoate. In Pseudomonas putida (strain W619), this protein is 4-hydroxybenzoate octaprenyltransferase.